Consider the following 253-residue polypeptide: MAVQISKKRKFVADGIFKAELNEFLTRELAEDGYSGVEVRVTPTRTEIIILATRTQNVLGEKGRRIRELTAVVQKRFGFPEGSVELYAEKVATRGLCAIAQAESLRYKLLGGLAVRRACYGVLRFIMESGSKGCEVVVSGKLRGQRAKSMKFVDGLMIHSGDPVNYYVDTAVRHVLLRQGVLGIKVKIMLAWDPSGKIGPKKPLPDHVSIVEPKDEILPTTPISEQKGGKPDPQVPQQPPQQPPAMPPPVPTA.

Residues 21-92 form the KH type-2 domain; that stretch reads LNEFLTRELA…SVELYAEKVA (72 aa). The segment at 211-253 is disordered; the sequence is VEPKDEILPTTPISEQKGGKPDPQVPQQPPQQPPAMPPPVPTA. A compositionally biased stretch (pro residues) spans 233-253; that stretch reads PQVPQQPPQQPPAMPPPVPTA.

This sequence belongs to the universal ribosomal protein uS3 family.

It is found in the cytoplasm. The protein localises to the nucleus. The protein resides in the nucleolus. Its subcellular location is the mitochondrion inner membrane. It localises to the cytoskeleton. It is found in the spindle. The catalysed reaction is 2'-deoxyribonucleotide-(2'-deoxyribose 5'-phosphate)-2'-deoxyribonucleotide-DNA = a 3'-end 2'-deoxyribonucleotide-(2,3-dehydro-2,3-deoxyribose 5'-phosphate)-DNA + a 5'-end 5'-phospho-2'-deoxyribonucleoside-DNA + H(+). Functionally, component of the small ribosomal subunit. The ribosome is a large ribonucleoprotein complex responsible for the synthesis of proteins in the cell. Has endonuclease activity and plays a role in repair of damaged DNA. Also involved in other processes including regulation of transcription, translation of its cognate mRNA, spindle formation and chromosome movement during mitosis, and apoptosis. The chain is Small ribosomal subunit protein uS3 (RPS3) from Ambystoma mexicanum (Axolotl).